Here is a 313-residue protein sequence, read N- to C-terminus: uncharacterized protein (313 aa).

To M.jannaschii MJ0977 C-terminal region.

This is an uncharacterized protein from Methanocaldococcus jannaschii (strain ATCC 43067 / DSM 2661 / JAL-1 / JCM 10045 / NBRC 100440) (Methanococcus jannaschii).